The chain runs to 105 residues: uncharacterized protein (105 aa).

The next 2 helical transmembrane spans lie at 7–26 (VLSV…WLSL) and 30–52 (VDMT…LISI).

The protein localises to the cell membrane. This is an uncharacterized protein from Archaeoglobus fulgidus (strain ATCC 49558 / DSM 4304 / JCM 9628 / NBRC 100126 / VC-16).